A 470-amino-acid chain; its full sequence is Leucine-rich repeat extensin-like protein 6 (470 aa).

Positions 1–28 (MREDTFFFQWWFLVSGLSFIFLLPQAFT) are cleaved as a signal peptide. Asn83 carries N-linked (GlcNAc...) asparagine glycosylation. LRR repeat units lie at residues 98-122 (VLTV…LGLL), 123-146 (TDLA…LKCL), 147-170 (HLLH…IFSL), 171-194 (PSLK…LFDL), 196-217 (LDAL…IGNS), 219-241 (VSVL…FYKM), 243-265 (KTLH…EIGL), 266-290 (LNQL…IGDM), 291-314 (KSLE…ICRL), and 316-337 (RLEN…CLRL). N-linked (GlcNAc...) asparagine glycosylation is present at Asn319. A disordered region spans residues 378 to 411 (SPPPPPPPPPPPPPPPPPPPPPPPPPPPPPYVYP). Positions 378 to 470 (SPPPPPPPPP…CNDLPTPVHY (93 aa)) are contains the Ser-Pro(4) repeats.

In terms of processing, hydroxylated on proline residues in the S-P-P-P-P repeat. Post-translationally, O-glycosylated on hydroxyprolines. In terms of tissue distribution, expressed in roots.

It is found in the secreted. The protein resides in the cell wall. Modulates cell morphogenesis by regulating cell wall formation and assembly, and/or growth polarization. The sequence is that of Leucine-rich repeat extensin-like protein 6 (LRX6) from Arabidopsis thaliana (Mouse-ear cress).